Consider the following 394-residue polypeptide: L-lactate dehydrogenase (394 aa).

One can recognise an FMN hydroxy acid dehydrogenase domain in the interval 1–380 (MIISAASDYR…SRDSLVQNAE (380 aa)). Substrate is bound at residue tyrosine 24. Serine 106 and glutamine 127 together coordinate FMN. Tyrosine 129 lines the substrate pocket. Threonine 155 lines the FMN pocket. Residue arginine 164 coordinates substrate. Lysine 251 lines the FMN pocket. The active-site Proton acceptor is histidine 275. Arginine 278 contacts substrate. An FMN-binding site is contributed by 306–330 (DSGIRNGLDVVRMIALGADSVLLGR).

The protein belongs to the FMN-dependent alpha-hydroxy acid dehydrogenase family. The cofactor is FMN.

Its subcellular location is the cell inner membrane. The enzyme catalyses (S)-lactate + A = pyruvate + AH2. Its function is as follows. Catalyzes the conversion of L-lactate to pyruvate. Is coupled to the respiratory chain. In Klebsiella pneumoniae (strain 342), this protein is L-lactate dehydrogenase.